A 206-amino-acid chain; its full sequence is 5,6-dimethylbenzimidazole synthase (206 aa).

Residues 18–22 (RRDVR), S46, L95, and S153 contribute to the FMN site.

The protein belongs to the BluB family. Homooctamer.

The catalysed reaction is FMNH2 + O2 = dialurate + 5,6-dimethylbenzimidazole + D-erythrose 4-phosphate + H(+). Involved in the biosynthesis of cobalamin (vitamin B12). Catalyzes the oxidative fragmentation and contraction of the isoalloxazine heterocycle and the cleavage of the ribityl tail of FMNH(2) to form 5,6-dimethylbenzimidazole (DMB) and D-erythrose 4-phosphate (E4P). NAD(P)H is only required initially to reduce FMN and oxygen drives the oxidative fragmentation. The sequence is that of 5,6-dimethylbenzimidazole synthase (bluB) from Rhodobacter capsulatus (Rhodopseudomonas capsulata).